Reading from the N-terminus, the 571-residue chain is RNA polymerase sigma factor SigA (571 aa).

A sigma-70 factor domain-2 region spans residues M321–T391. Residues D345 to Q348 carry the Interaction with polymerase core subunit RpoC motif. The sigma-70 factor domain-3 stretch occupies residues E400–A476. The segment at V489–H542 is sigma-70 factor domain-4. Residues L515–A534 constitute a DNA-binding region (H-T-H motif).

This sequence belongs to the sigma-70 factor family. RpoD/SigA subfamily. In terms of assembly, interacts transiently with the RNA polymerase catalytic core.

The protein localises to the cytoplasm. Its function is as follows. Sigma factors are initiation factors that promote the attachment of RNA polymerase to specific initiation sites and are then released. This sigma factor is the primary sigma factor during exponential growth. The protein is RNA polymerase sigma factor SigA of Chlamydia muridarum (strain MoPn / Nigg).